An 888-amino-acid polypeptide reads, in one-letter code: Mitogen-activated protein kinase kinase kinase 12 (888 aa).

The segment covering 26-42 has biased composition (basic and acidic residues); it reads MRKLDPDTSDCTPEKDL. The tract at residues 26 to 104 is disordered; the sequence is MRKLDPDTSD…TGSPESRASR (79 aa). Residues threonine 37 and threonine 43 each carry the phosphothreonine modification. The span at 64 to 75 shows a compositional bias: pro residues; that stretch reads SPSPGGEPPPEP. The Protein kinase domain maps to 158–399; that stretch reads ILDLQWVGSG…FRQILLHLDI (242 aa). Residues 164–172 and lysine 185 contribute to the ATP site; that span reads VGSGAQGAV. Aspartate 269 (proton acceptor) is an active-site residue. Leucine-zipper regions lie at residues 423–444 and 476–497; these read VKLH…EEEL and LNAL…EQAL. The segment at 557 to 620 is disordered; sequence GVGLPGCPKA…GGLGVGPTAW (64 aa). Positions 572–584 are enriched in basic residues; the sequence is RSRRGKTRHRKAS. Residues 605-615 show a composition bias toward gly residues; that stretch reads GGLGSPGGLGV. The residue at position 640 (serine 640) is a Phosphoserine. Disordered regions lie at residues 654–731 and 743–888; these read RGRG…YQHL and TRSQ…SLPP. Gly residues predominate over residues 704–725; the sequence is PGEGVGLLGTGREGTTGRGGSR. Acidic residues predominate over residues 752–763; the sequence is SEEEEGEVDSEV. 2 stretches are compositionally biased toward polar residues: residues 776 to 789 and 798 to 812; these read NMRQ…SENP and SEPS…GSTN. Over residues 813-823 the composition is skewed to basic and acidic residues; that stretch reads TDERPDERSDD.

Belongs to the protein kinase superfamily. STE Ser/Thr protein kinase family. MAP kinase kinase kinase subfamily. As to quaternary structure, homodimer. Interacts with MBIP. Mg(2+) is required as a cofactor. In terms of processing, autophosphorylated on Ser/Thr. Phosphorylated in cytosol under basal conditions and dephosphorylated when membrane-associated. The activity of MAP3K12 can be regulated through its proteasomal degradation. APOE, through a receptor-mediated mechanism, activates MAP3K12 by preventing its proteasomal degradation.

The protein localises to the cytoplasm. It localises to the cell membrane. It catalyses the reaction L-seryl-[protein] + ATP = O-phospho-L-seryl-[protein] + ADP + H(+). It carries out the reaction L-threonyl-[protein] + ATP = O-phospho-L-threonyl-[protein] + ADP + H(+). In terms of biological role, part of a non-canonical MAPK signaling pathway. Activated by APOE, enhances the AP-1-mediated transcription of APP, via a MAP kinase signal transduction pathway composed of MAP2K7 and MAPK1/ERK2 and MAPK3/ERK1. May be an activator of the JNK/SAPK pathway. This is Mitogen-activated protein kinase kinase kinase 12 (Map3k12) from Rattus norvegicus (Rat).